We begin with the raw amino-acid sequence, 4235 residues long: Tenellin synthetase (4235 aa).

One can recognise a Ketosynthase family 3 (KS3) domain in the interval 15-455 (SEPIAIVGSA…GTNAHAIIER (441 aa)). Active-site for beta-ketoacyl synthase activity residues include C189, H326, and H375. The interval 590–924 (IFTGQGAQWP…ANDAVAFSTA (335 aa)) is malonyl-CoA:ACP transacylase (MAT) domain. The segment at 993 to 1135 (HELLGRRMPD…GRIAVHLGAK (143 aa)) is N-terminal hotdog fold. The interval 993 to 1310 (HELLGRRMPD…GFEVRAVGEP (318 aa)) is dehydratase (DH) domain. Positions 993 to 1313 (HELLGRRMPD…VRAVGEPDAS (321 aa)) constitute a PKS/mFAS DH domain. H1025 (proton acceptor; for dehydratase activity) is an active-site residue. Positions 1158-1313 (LQQLDCEKLY…VRAVGEPDAS (156 aa)) are C-terminal hotdog fold. The active-site Proton donor; for dehydratase activity is the D1217. The methyltransferase (MT) domain stretch occupies residues 1459-1652 (RLYTEDKGMH…FSGVDHIVHD (194 aa)). The ketoreductase (KR) domain stretch occupies residues 2208–2381 (TYLMVGAAGG…AASIIHVGHV (174 aa)). The 81-residue stretch at 2500 to 2580 (EAAAAALKGF…QLSALAAKLA (81 aa)) folds into the Carrier 1 domain. S2540 is subject to O-(pantetheine 4'-phosphoryl)serine. Residues 2587–2709 (RAQLEEASGN…EISSNGFFTQ (123 aa)) form a disordered region. Basic and acidic residues predominate over residues 2605-2619 (NDKETGPSKKGKAQE). 2 stretches are compositionally biased toward polar residues: residues 2645–2659 (GGSS…SSVS) and 2666–2678 (QEST…NNGE). A compositionally biased stretch (low complexity) spans 2679-2695 (STPSKSSNCNSDSGSDN). Residues 2720 to 3163 (REAPMSPAQS…TAQSVGDCVV (444 aa)) form a condensation (C) domain region. The tract at residues 3197 to 3609 (CQQHSTKSAI…DGTLLCFGRI (413 aa)) is adenylation (A) (KR) domain. The interval 3724 to 3750 (DEAAAATSPSNDNNNNNTPSGGGGEKM) is disordered. A compositionally biased stretch (low complexity) spans 3726–3742 (AAAATSPSNDNNNNNTP). Residues 3748–3833 (EKMTVRQGEL…GMARCVAEQR (86 aa)) enclose the Carrier 2 domain. Residue S3793 is modified to O-(pantetheine 4'-phosphoryl)serine. The segment at 3860-3889 (EKLQHSSASSSSSSSSSSAGSSSTQRPRKT) is disordered. The span at 3865-3882 (SSASSSSSSSSSSAGSSS) shows a compositional bias: low complexity. The reductase (RED) domain stretch occupies residues 3896-4141 (LTGATGFLGG…LDFGQVDKVV (246 aa)).

In the C-terminal section; belongs to the NRP synthetase family.

The protein operates within secondary metabolite biosynthesis. In terms of biological role, hybrid PKS-NRPS synthetase; part of the gene cluster that mediates the biosynthesis of tenellin-type 2-pyridones, iron-chelating compounds involved in iron stress tolerance, competition with the natural competitor fungus Metarhizium robertsii and insect hosts infection. TenS catalyzes the assembly of the polyketide-amino acid backbone. Because tenS lacks a designated enoylreductase (ER) domain, the required activity is provided the enoyl reductase tenC. Upon formation of the polyketide backbone on the thiotemplate, the triketide is transferred to the NRPS module and linked to tyrosine to produce the pyrrolidine-2-dione intermediates, including pretellinin A, 11-hydropretellenin A, 12-hydropretellenin A, 13-hydropretellenin A, 14-hydropretellenin A, 12-oxopretellenin A and prototellinin D. The pathway begins with the assembly of the polyketide-amino acid backbone by the hybrid PKS-NRPS tenS with the help of the enoyl reductase tenC. These enzymes catalyze the synthesis of the pyrrolidine-2-dione intermediates pretellinin A, 11-hydropretellenin A, 12-hydropretellenin A, 13-hydropretellenin A, 14-hydropretellenin A, 12-oxopretellenin A and prototellinin D. The cytochrome P450 monooxygenase tenA then catalyzes an oxidative ring expansion of pretenellin A and 14-hydropretellenin A to form the 2-pyridone core, leading to pretenellin B and pyridovericin, respectively. The cytochrome P450 monooxygenase tenB is then required for the selective N-hydroxylation of the 2-pyridone nitrogen of yield tellinin and 15-hydroxytellenin (15-HT), respectively. The UDP-glucosyltransferase GT1 and the methyltransferase MT1, located outside the tenS gene cluster, contribute to the stepwise glycosylation and methylation of 15-HT to obtain the glycoside pyridovericin-N-O-(4-O-methyl-beta-D-glucopyranoside) (PMGP). Additional related compounds such as 1-O-methyl-15-HT, (8Z)-1-O-methyl-15-HT, and O-methyltenellin A are also produced but the enzymes involved in their biosynthesis have still to be determined. This Beauveria bassiana (strain ARSEF 2860) (White muscardine disease fungus) protein is Tenellin synthetase.